We begin with the raw amino-acid sequence, 433 residues long: Nuclear hormone receptor family member nhr-98 (433 aa).

The segment at residues 41-116 (SKKCQICENP…FGMTIDNFQF (76 aa)) is a DNA-binding region (nuclear receptor). NR C4-type zinc fingers lie at residues 44-64 (CQIC…CRAC) and 80-104 (CKTE…MQRC). The NR LBD domain occupies 177–433 (ETPYQVSNVL…CSHPGIFLNA (257 aa)).

It belongs to the nuclear hormone receptor family.

The protein localises to the nucleus. Functionally, orphan nuclear receptor. This chain is Nuclear hormone receptor family member nhr-98 (nhr-98), found in Caenorhabditis elegans.